Reading from the N-terminus, the 108-residue chain is Vitelline membrane protein 15a-1 (108 aa).

The signal sequence occupies residues 1 to 18 (MNKFIILAIFALAVGAMA). The VM domain occupies 52-88 (HAPHAKCGANLLVGCAPSVAHVPCVPLPGHAPAHGYG). A disordered region spans residues 87 to 108 (YGHAPAPHYRAPESDSFDQFEE).

The protein belongs to the vitelline membrane family. Expressed in the middle and posterior regions of the follicle cells.

The protein resides in the secreted. The polypeptide is Vitelline membrane protein 15a-1 (Aedes aegypti (Yellowfever mosquito)).